The following is a 476-amino-acid chain: Ribulose bisphosphate carboxylase large chain (476 aa).

Residues 1–2 constitute a propeptide that is removed on maturation; that stretch reads MS. An N-acetylproline modification is found at proline 3. An N6,N6,N6-trimethyllysine modification is found at lysine 14. Positions 123 and 173 each coordinate substrate. Lysine 175 (proton acceptor) is an active-site residue. Residue lysine 177 coordinates substrate. Mg(2+)-binding residues include lysine 201, aspartate 203, and glutamate 204. Lysine 201 carries the N6-carboxylysine modification. Catalysis depends on histidine 294, which acts as the Proton acceptor. The substrate site is built by arginine 295, histidine 327, and serine 379.

Belongs to the RuBisCO large chain family. Type I subfamily. As to quaternary structure, heterohexadecamer of 8 large chains and 8 small chains; disulfide-linked. The disulfide link is formed within the large subunit homodimers. Mg(2+) serves as cofactor. Post-translationally, the disulfide bond which can form in the large chain dimeric partners within the hexadecamer appears to be associated with oxidative stress and protein turnover.

It localises to the plastid. The protein localises to the chloroplast. It carries out the reaction 2 (2R)-3-phosphoglycerate + 2 H(+) = D-ribulose 1,5-bisphosphate + CO2 + H2O. The enzyme catalyses D-ribulose 1,5-bisphosphate + O2 = 2-phosphoglycolate + (2R)-3-phosphoglycerate + 2 H(+). In terms of biological role, ruBisCO catalyzes two reactions: the carboxylation of D-ribulose 1,5-bisphosphate, the primary event in carbon dioxide fixation, as well as the oxidative fragmentation of the pentose substrate in the photorespiration process. Both reactions occur simultaneously and in competition at the same active site. The polypeptide is Ribulose bisphosphate carboxylase large chain (Liriodendron tulipifera (Tuliptree)).